A 134-amino-acid polypeptide reads, in one-letter code: ATP synthase epsilon chain (134 aa).

Residues 94-104 are compositionally biased toward basic and acidic residues; sequence AKLAKSRAESH. The disordered stretch occupies residues 94–115; that stretch reads AKLAKSRAESHLEEDDDNTDIN.

The protein belongs to the ATPase epsilon chain family. As to quaternary structure, F-type ATPases have 2 components, CF(1) - the catalytic core - and CF(0) - the membrane proton channel. CF(1) has five subunits: alpha(3), beta(3), gamma(1), delta(1), epsilon(1). CF(0) has three main subunits: a, b and c.

The protein localises to the cell membrane. Functionally, produces ATP from ADP in the presence of a proton gradient across the membrane. The chain is ATP synthase epsilon chain from Staphylococcus epidermidis (strain ATCC 35984 / DSM 28319 / BCRC 17069 / CCUG 31568 / BM 3577 / RP62A).